A 397-amino-acid polypeptide reads, in one-letter code: Cytochrome b (397 aa).

Transmembrane regions (helical) follow at residues 38–58, 82–104, 119–139, and 185–205; these read FGSL…FLAM, WLLR…LHIF, VWCL…IGYV, and FFSL…LHLA. 2 residues coordinate heme b: His88 and His102. Residues His189 and His203 each contribute to the heme b site. His208 is a binding site for a ubiquinone. Helical transmembrane passes span 231 to 251, 295 to 315, 327 to 347, and 354 to 373; these read FYVK…IWIF, AGGV…PFFK, IYQG…WIGC, and FVTI…AITP.

The protein belongs to the cytochrome b family. The main subunits of complex b-c1 are: cytochrome b, cytochrome c1 and the Rieske protein. The cofactor is heme b.

The protein resides in the mitochondrion inner membrane. Component of the ubiquinol-cytochrome c reductase complex (complex III or cytochrome b-c1 complex) that is part of the mitochondrial respiratory chain. The b-c1 complex mediates electron transfer from ubiquinol to cytochrome c. Contributes to the generation of a proton gradient across the mitochondrial membrane that is then used for ATP synthesis. The sequence is that of Cytochrome b (MT-CYB) from Oryza sativa subsp. japonica (Rice).